A 337-amino-acid chain; its full sequence is Anthranilate phosphoribosyltransferase (337 aa).

5-phospho-alpha-D-ribose 1-diphosphate contacts are provided by residues G81, 84–85, S89, 91–94, 109–117, and A121; these read GD, NVST, and KHGNRALSS. An anthranilate-binding site is contributed by G81. S93 serves as a coordination point for Mg(2+). An anthranilate-binding site is contributed by N112. R167 serves as a coordination point for anthranilate. Positions 226 and 227 each coordinate Mg(2+).

This sequence belongs to the anthranilate phosphoribosyltransferase family. Homodimer. Mg(2+) serves as cofactor.

The catalysed reaction is N-(5-phospho-beta-D-ribosyl)anthranilate + diphosphate = 5-phospho-alpha-D-ribose 1-diphosphate + anthranilate. The protein operates within amino-acid biosynthesis; L-tryptophan biosynthesis; L-tryptophan from chorismate: step 2/5. Catalyzes the transfer of the phosphoribosyl group of 5-phosphorylribose-1-pyrophosphate (PRPP) to anthranilate to yield N-(5'-phosphoribosyl)-anthranilate (PRA). The protein is Anthranilate phosphoribosyltransferase of Bradyrhizobium sp. (strain ORS 278).